The sequence spans 71 residues: Large ribosomal subunit protein bL31 (71 aa).

Residues Cys-16, Cys-18, Cys-36, and Cys-39 each coordinate Zn(2+).

It belongs to the bacterial ribosomal protein bL31 family. Type A subfamily. Part of the 50S ribosomal subunit. Zn(2+) serves as cofactor.

Functionally, binds the 23S rRNA. The chain is Large ribosomal subunit protein bL31 from Thermus thermophilus (strain ATCC BAA-163 / DSM 7039 / HB27).